Consider the following 689-residue polypeptide: uncharacterized protein (689 aa).

Substrate is bound at residue Ser566. Residue Tyr579 is the Proton acceptor of the active site.

Belongs to the short-chain dehydrogenases/reductases (SDR) family.

This is an uncharacterized protein from Bacillus subtilis (strain 168).